The following is a 926-amino-acid chain: DNA mismatch repair protein MutS (926 aa).

Positions 1–60 (MAASQNPIQGSLFGGNEESDLNKAEKLKGSERSNVNLSHQQLKEDASLRPRIKQTPKNPN) are disordered. Residues 20–31 (DLNKAEKLKGSE) show a composition bias toward basic and acidic residues. 726-733 (GPNASGKS) is a binding site for ATP.

It belongs to the DNA mismatch repair MutS family.

Its function is as follows. This protein is involved in the repair of mismatches in DNA. It is possible that it carries out the mismatch recognition step. This protein has a weak ATPase activity. The chain is DNA mismatch repair protein MutS from Prochlorococcus marinus (strain NATL2A).